A 1197-amino-acid polypeptide reads, in one-letter code: Serine/threonine-protein kinase pakA (1197 aa).

Disordered regions lie at residues 1-96 (MEEK…PIYR), 328-383 (QKED…KNID), 430-468 (REEE…EQRN), 485-543 (EEEE…NLMG), and 562-819 (NSSG…RVGT). Residues 19–30 (QKFEQFLDKTDK) are compositionally biased toward basic and acidic residues. Residues 34-49 (ATRNNYRGPVSSSTGI) show a composition bias toward polar residues. Positions 51 to 69 (NDKEKKSHSYFKVREEGSN) are enriched in basic and acidic residues. Residues 70-79 (KRPSSFSASN) show a composition bias toward polar residues. Low complexity-rich tracts occupy residues 80–94 (PITP…SSPI) and 346–381 (NNNN…NNKN). Residues 439 to 458 (RVERELASRRRQEEDRIKRE) show a composition bias toward basic and acidic residues. Low complexity predominate over residues 494-523 (SQLQSSQQQQKSSSTQRSSNTVTSTSSSST). Polar residues predominate over residues 524 to 536 (GGDSNPSTSQKPT). The residue at position 585 (threonine 585) is a Phosphothreonine; by PKB. A compositionally biased stretch (polar residues) spans 593 to 615 (SENTPLVSSIDNNGVNNKMSRSH). Low complexity-rich tracts occupy residues 636–653 (NVNN…NNNH) and 671–707 (SSSM…SSPT). Positions 718-727 (TTSTGSTRKG) are enriched in polar residues. Basic and acidic residues predominate over residues 728–737 (SISEREDKKK). Low complexity predominate over residues 739–756 (SSSSTSSSSSSNGGLSSS). A compositionally biased stretch (basic and acidic residues) spans 757 to 790 (GKDHKKDHSSEEKEKEKKSFFNKLFSKEKKDHHS). Residues 817–830 (VGTPFNVKHDVHVN) form the CRIB domain. The Protein kinase domain occupies 911–1164 (YYNINKIGEG…SSSLLHHPFL (254 aa)). ATP-binding positions include 917 to 925 (IGEGGAGEV) and lysine 940. The active-site Proton acceptor is the aspartate 1032.

Belongs to the protein kinase superfamily. STE Ser/Thr protein kinase family. STE20 subfamily. Mg(2+) is required as a cofactor. Post-translationally, phosphorylation on Thr-585 results in cAMP-mediated activation and localization to the cytoskeleton. In terms of tissue distribution, colocalizes with myosin II to the cleavage furrow of cells undergoing cytokinesis and the posterior cortex of polarized cells.

It localises to the cytoplasm. Its subcellular location is the cytosol. The protein localises to the cytoskeleton. It catalyses the reaction L-seryl-[protein] + ATP = O-phospho-L-seryl-[protein] + ADP + H(+). The enzyme catalyses L-threonyl-[protein] + ATP = O-phospho-L-threonyl-[protein] + ADP + H(+). Its function is as follows. Regulator of the myosin II component of the cytoskeleton: required for regulation of cytokinesis. Functions during chemotaxis, required for maintaining the direction of cell movement, suppressing lateral pseudopod extension, and proper retraction of the posterior of chemotaxing cells. In Dictyostelium discoideum (Social amoeba), this protein is Serine/threonine-protein kinase pakA (pakA).